A 231-amino-acid chain; its full sequence is Phosphatidylserine decarboxylase proenzyme (231 aa).

Catalysis depends on serine 188, which acts as the Schiff-base intermediate with substrate; via pyruvic acid. The residue at position 188 (serine 188) is a Pyruvic acid (Ser); by autocatalysis.

This sequence belongs to the phosphatidylserine decarboxylase family. PSD-A subfamily. In terms of assembly, heterodimer of a large membrane-associated beta subunit and a small pyruvoyl-containing alpha subunit. The cofactor is pyruvate. In terms of processing, is synthesized initially as an inactive proenzyme. Formation of the active enzyme involves a self-maturation process in which the active site pyruvoyl group is generated from an internal serine residue via an autocatalytic post-translational modification. Two non-identical subunits are generated from the proenzyme in this reaction, and the pyruvate is formed at the N-terminus of the alpha chain, which is derived from the carboxyl end of the proenzyme. The post-translation cleavage follows an unusual pathway, termed non-hydrolytic serinolysis, in which the side chain hydroxyl group of the serine supplies its oxygen atom to form the C-terminus of the beta chain, while the remainder of the serine residue undergoes an oxidative deamination to produce ammonia and the pyruvoyl prosthetic group on the alpha chain.

The protein resides in the cell membrane. It catalyses the reaction a 1,2-diacyl-sn-glycero-3-phospho-L-serine + H(+) = a 1,2-diacyl-sn-glycero-3-phosphoethanolamine + CO2. It functions in the pathway phospholipid metabolism; phosphatidylethanolamine biosynthesis; phosphatidylethanolamine from CDP-diacylglycerol: step 2/2. Functionally, catalyzes the formation of phosphatidylethanolamine (PtdEtn) from phosphatidylserine (PtdSer). The chain is Phosphatidylserine decarboxylase proenzyme from Rickettsia africae (strain ESF-5).